The primary structure comprises 446 residues: Peptide chain release factor 1, mitochondrial (446 aa).

Residues 1–62 constitute a mitochondrion transit peptide; it reads MSHHLCIWLF…LLNKSWSRGC (62 aa). A GGQ domain region spans residues 298 to 362; that stretch reads PKDLRVDTFR…LRARLYQQII (65 aa). A GGQ motif is present at residues 312-314; sequence GGQ. At Gln-314 the chain carries N5-methylglutamine.

This sequence belongs to the prokaryotic/mitochondrial release factor family. In terms of processing, methylation of glutamine in the GGQ triplet by HEMK1 is conserved from bacteria to mammals.

Its subcellular location is the mitochondrion. Functionally, mitochondrial peptide chain release factor that directs the termination of translation in response to the peptide chain non-canonical stop codons AGG and AGA. Non-canonical termination codons AGG and AGA are found at the end of MT-CO1/COX1 and MT-ND6/ND6 open reading frames, respectively. Recognizes non-canonical stop codons via a network of interactions between the codon, MTRF1 and the ribosomal RNA (rRNA): in contrast to other translation release factors, which identify the codon in the A-site via direct interactions of amino acid side chains with the bases, MTRF1 repositions the first 2 bases of the stop codon to use an intricate network of interactions that includes residues of the release factor, the rRNA of the small ribosomal subunit, as well as neighboring bases of the mRNA. The sequence is that of Peptide chain release factor 1, mitochondrial from Mus musculus (Mouse).